The primary structure comprises 258 residues: MSATPLFKTYDPVEKLISQVGALASGGTGGGTTTNALATTGGTMTGNITMSGTSKITQATAPTVASDVTNKQYVDSAVSAVSAPQMSFAGWKLNNASFFEVNPTTQVKLFTNIDGIGANQWTDTTEDAISVSGGIFSIQNKSTSKTMWYICSAHFTGLSNKTAPTVAGALRFKFNDEDSGNPINSQWCVLRSFSTSNVPSPEASAPQVSGSNMMYATISVPPGTTRRISVIANNPSATDVMQLNQTDDVCQIMITRQS.

The protein belongs to the IIV-6 219L family.

This is an uncharacterized protein from Aedes vexans (Inland floodwater mosquito).